The sequence spans 229 residues: Cytidylate kinase (229 aa).

10 to 18 (GPAGSGKST) serves as a coordination point for ATP.

It belongs to the cytidylate kinase family. Type 1 subfamily.

The protein resides in the cytoplasm. It carries out the reaction CMP + ATP = CDP + ADP. The enzyme catalyses dCMP + ATP = dCDP + ADP. The sequence is that of Cytidylate kinase from Leptospira interrogans serogroup Icterohaemorrhagiae serovar Lai (strain 56601).